The primary structure comprises 107 residues: U1-lycotoxin-Ls1b (107 aa).

The first 20 residues, 1-20 (MMKVLVVVALLVTLISYSSG), serve as a signal peptide directing secretion. Positions 21–41 (EGIDDLEADELLSLMANEQTR) are excised as a propeptide. 4 disulfide bridges follow: cysteine 44–cysteine 59, cysteine 51–cysteine 68, cysteine 58–cysteine 86, and cysteine 70–cysteine 84.

This sequence belongs to the neurotoxin 19 (CSTX) family. 04 (U1-Lctx) subfamily. Expressed by the venom gland.

The protein localises to the secreted. This chain is U1-lycotoxin-Ls1b, found in Lycosa singoriensis (Wolf spider).